A 316-amino-acid polypeptide reads, in one-letter code: ATP synthase gamma chain (316 aa).

This sequence belongs to the ATPase gamma chain family. As to quaternary structure, F-type ATPases have 2 components, CF(1) - the catalytic core - and CF(0) - the membrane proton channel. CF(1) has five subunits: alpha(3), beta(3), gamma(1), delta(1), epsilon(1). CF(0) has three main subunits: a, b and c.

The protein localises to the cellular thylakoid membrane. In terms of biological role, produces ATP from ADP in the presence of a proton gradient across the membrane. The gamma chain is believed to be important in regulating ATPase activity and the flow of protons through the CF(0) complex. In Prochlorococcus marinus (strain MIT 9301), this protein is ATP synthase gamma chain.